A 243-amino-acid polypeptide reads, in one-letter code: Peptide deformylase, mitochondrial (243 aa).

The transit peptide at 1–39 (MARLWGALSLWPLWAAVPWGGAAAVGVRACSSTAAPDGV) directs the protein to the mitochondrion. The substrate site is built by Gly71, Pro169, and Gly171. The interval 165-175 (LVTFPEGCESV) is hydrophobic dimerization interface. Co(2+) is bound by residues Cys172 and His214. The active site involves Glu215. His218 is a Co(2+) binding site.

The protein belongs to the polypeptide deformylase family. In terms of assembly, homodimer. Co(2+) serves as cofactor. As to expression, ubiquitous.

It localises to the mitochondrion. The enzyme catalyses N-terminal N-formyl-L-methionyl-[peptide] + H2O = N-terminal L-methionyl-[peptide] + formate. Functionally, removes the formyl group from the N-terminal Met of newly synthesized proteins. The sequence is that of Peptide deformylase, mitochondrial from Homo sapiens (Human).